A 144-amino-acid polypeptide reads, in one-letter code: Endoribonuclease YbeY (144 aa).

His-108, His-112, and His-118 together coordinate Zn(2+).

It belongs to the endoribonuclease YbeY family. Requires Zn(2+) as cofactor.

Its subcellular location is the cytoplasm. In terms of biological role, single strand-specific metallo-endoribonuclease involved in late-stage 70S ribosome quality control and in maturation of the 3' terminus of the 16S rRNA. The sequence is that of Endoribonuclease YbeY from Phytoplasma australiense.